The following is a 481-amino-acid chain: Transcription factor TGA9 (481 aa).

Residues 91–181 form a disordered region; it reads QTLPTESSKS…GKQLDAKTLR (91 aa). A compositionally biased stretch (low complexity) spans 97-109; sequence SSKSGGESSDSGS. The segment covering 110-126 has biased composition (polar residues); sequence ANFSGKAESQQPESPMS. The span at 143-155 shows a compositional bias: low complexity; it reads SSSTSGLPSTSRT. A Nuclear localization signal motif is present at residues 165–172; that stretch reads KRKATTSG. The bZIP domain occupies 176-220; it reads DAKTLRRLAQNREAARKSRLRKKAYVQQLESSRIKLSQLEQELQR. Positions 178–198 are basic motif; it reads KTLRRLAQNREAARKSRLRKK. Residues 204 to 218 are leucine-zipper; that stretch reads LESSRIKLSQLEQEL. The 209-residue stretch at 242 to 450 folds into the DOG1 domain; sequence AAIFDMEYGR…RALSSLWLSR (209 aa).

It belongs to the bZIP family. Homodimer. Binds DNA as a dimer. Interacts with floral glutaredoxins GRXC7/ROXY1 and GRXC8/ROXY2 in the nucleus. Interacts with TGA1, TGA2, TGA3, TGA4, TGA5, TGA6, TGA7, TGA10 and PAN. As to expression, mostly expressed in stems, inflorescence apex and flowers, and, to a lower extent, in seedlings, leaves and siliques.

It localises to the nucleus. In terms of biological role, together with TGA10, basic leucine-zipper transcription factor required for anther development, probably via the activation of SPL expression in anthers and via the regulation of genes with functions in early and middle tapetal development. Required for signaling responses to pathogen-associated molecular patterns (PAMPs) such as flg22 that involves chloroplastic reactive oxygen species (ROS) production and subsequent expression of H(2)O(2)-responsive genes. This is Transcription factor TGA9 from Arabidopsis thaliana (Mouse-ear cress).